Reading from the N-terminus, the 271-residue chain is Elongation factor Ts (271 aa).

The involved in Mg(2+) ion dislocation from EF-Tu stretch occupies residues 76–79 (TDFV).

The protein belongs to the EF-Ts family.

The protein localises to the cytoplasm. In terms of biological role, associates with the EF-Tu.GDP complex and induces the exchange of GDP to GTP. It remains bound to the aminoacyl-tRNA.EF-Tu.GTP complex up to the GTP hydrolysis stage on the ribosome. The chain is Elongation factor Ts from Saccharopolyspora erythraea (strain ATCC 11635 / DSM 40517 / JCM 4748 / NBRC 13426 / NCIMB 8594 / NRRL 2338).